The chain runs to 127 residues: Anti-adapter protein IraD (127 aa).

This sequence belongs to the GpW/Gp25 family. IraD subfamily. As to quaternary structure, interacts with RssB.

The protein resides in the cytoplasm. Its function is as follows. Inhibits RpoS proteolysis by regulating RssB activity, thereby increasing the stability of the sigma stress factor RpoS during oxidative stress. Its effect on RpoS stability is due to its interaction with RssB, which probably blocks the interaction of RssB with RpoS, and the consequent delivery of the RssB-RpoS complex to the ClpXP protein degradation pathway. The protein is Anti-adapter protein IraD of Escherichia coli (strain UTI89 / UPEC).